Here is a 162-residue protein sequence, read N- to C-terminus: Endoribonuclease YbeY (162 aa).

His130, His134, and His140 together coordinate Zn(2+).

It belongs to the endoribonuclease YbeY family. Zn(2+) serves as cofactor.

The protein resides in the cytoplasm. Functionally, single strand-specific metallo-endoribonuclease involved in late-stage 70S ribosome quality control and in maturation of the 3' terminus of the 16S rRNA. The chain is Endoribonuclease YbeY from Nitratidesulfovibrio vulgaris (strain ATCC 29579 / DSM 644 / CCUG 34227 / NCIMB 8303 / VKM B-1760 / Hildenborough) (Desulfovibrio vulgaris).